A 460-amino-acid polypeptide reads, in one-letter code: Protein king tubby (460 aa).

2 disordered regions span residues 75–97 and 115–208; these read NGSPGGINPVAMNTSRNHSNNMR and HELE…EGDV. The segment covering 85–97 has biased composition (polar residues); that stretch reads AMNTSRNHSNNMR. The segment covering 130–145 has biased composition (low complexity); that stretch reads QHQQSASHSANSTQSQ. S153 bears the Phosphoserine mark. The span at 194–203 shows a compositional bias: gly residues; that stretch reads NGTGNGTGGE.

This sequence belongs to the TUB family. Detected in sensory neurons which have a ciliary structure such as the chordotonal neurons, Orco-expressing olfactory receptor neurons, labellar gustatory receptor neurons and in the femoral chordotonal organ (at protein level). In the chordotonal neurons of the Johnston's organ expressed in the proximal to distal cilia, with lower levels of expression in the distal portion (at protein level). Also detected in the salivary glands and antenna (at protein level). Expressed in photoreceptor cells (at protein level). At stage 9 expression is detected in a subset of neuroblasts. By stage 12 expression is found in both the CNS and PNS. In late-stage embryos, expression persists in the CNS and PNS with more abundant expression in the antennal-maxillary sensory neurons and in bilateral groups of cells in the brain.

It localises to the cytoplasm. Its subcellular location is the nucleus. The protein localises to the cell projection. It is found in the cilium membrane. The protein resides in the rhabdomere. Functions in regulating protein trafficking, retinal maintenance and lipid storage. Protects photoreceptor cells R1 to R6 against light-induced retinal degeneration by stimulating norpA-mediated endocytosis of the rhodopsin ninaE (Rh1). In the auditory receptor neurons, functions as a cilia trafficking regulator of various transient receptor potential (TRP) channel components including iav and nompC. Likely to deliver pre-ciliary vesicles containing membrane proteins such as iav and nompC to the intraflagellar transport complex (IFT) at the cilia base. Plays a role in the inhibition of fat storage. The polypeptide is Protein king tubby (ktub) (Drosophila melanogaster (Fruit fly)).